The following is a 385-amino-acid chain: Photoreceptor ankyrin repeat protein (385 aa).

ANK repeat units follow at residues cysteine 17–glutamate 46, asparagine 53–glutamine 83, aspartate 87–leucine 116, arginine 122–serine 151, and arginine 156–leucine 190. The interval leucine 270 to lysine 385 is disordered. Residues alanine 284–valine 297 are compositionally biased toward pro residues. Residues alanine 304–glutamine 326 show a composition bias toward polar residues. Positions phenylalanine 361–proline 373 are enriched in basic and acidic residues. Gly residues predominate over residues arginine 374–lysine 385.

Isoform 1: Expressed predominantly in the retina. Isoform 2: Expressed in the pineal gland.

Its subcellular location is the cytoplasm. The protein localises to the cytosol. It is found in the nucleus. Its function is as follows. Acts as a transcriptional repressor for CRX-activated photoreceptor gene regulation. The sequence is that of Photoreceptor ankyrin repeat protein from Mus musculus (Mouse).